Here is a 321-residue protein sequence, read N- to C-terminus: MKKNILLVGMLVLLLMFVSACSGTASKGSSSDSASEKTEMRTYKSPKGNVNIPAHPKRIVTDFYAGELLSVGANVVGSGSWSFDNPFLKSKLKNVKDVGDPISVEKVMELQPDLIVVMNEENVDKLKKIAPTVVIPYNTAKNVEDTVSMFGDIAGAKDQAKSFMADFNKKAEAAKKKIAGVIDKDATFGIYENTDKGEFWVFNDNGGRGGQAVYNALGLKAPEKIEQDVIKKGEMKQLSQEVIPEYAADYMFITDYNPKGESKTLDKLENSSIWKNLDAVKHNRVFINDFDSFYPYDPISVSKQVDIITDMLIKRAEENKK.

Residues 1-20 form the signal peptide; it reads MKKNILLVGMLVLLLMFVSA. Cys-21 is lipidated: N-palmitoyl cysteine. Cys-21 carries the S-diacylglycerol cysteine lipid modification. Over residues 24 to 33 the composition is skewed to low complexity; the sequence is TASKGSSSDS. The tract at residues 24–48 is disordered; it reads TASKGSSSDSASEKTEMRTYKSPKG. Residues 58 to 316 form the Fe/B12 periplasmic-binding domain; sequence RIVTDFYAGE…IITDMLIKRA (259 aa).

The protein belongs to the bacterial solute-binding protein 8 family. As to quaternary structure, the complex is composed of an ATP-binding protein (FhuC), two transmembrane proteins (FhuB and FhuG) and a solute-binding protein (FhuD or YxeB).

The protein localises to the cell membrane. The protein resides in the membrane raft. Part of the ABC transporter complex FhuCBGD involved in iron(3+)-hydroxamate import. Binds the iron(3+)-hydroxamate complex and transfers it to the membrane-bound permease. Partially required for the transport of desferrioxamine. This is Iron(3+)-hydroxamate-binding protein YxeB (yxeB) from Bacillus subtilis (strain 168).